The chain runs to 760 residues: U-box domain-containing protein 3 (760 aa).

A coiled-coil region spans residues 146-217 (LMELMENALR…EQTEQLIELV (72 aa)). In terms of domain architecture, U-box spans 237–311 (SIPPYFRCPL…ASWLEANRIN (75 aa)). The segment covering 424–434 (ILGNHQSSSEM) has biased composition (polar residues). The tract at residues 424–448 (ILGNHQSSSEMSPKKNLESSNNVNH) is disordered. ARM repeat units lie at residues 504 to 543 (IENRVHIGRCGAITPLLSLLYSEEKLTQEHAVTALLNLSI), 545 to 584 (ELNKAMIVEVGAIEPLVHVLNTGNDRAKENSAASLFSLSV), 586 to 626 (QVNR…NLSI), 628 to 666 (HDNKARIVQAKAVKYLVELLDPDLEMVDKAVALLANLSA), and 668 to 707 (GEGRQAIVREGGIPLLVETVDLGSQRGKENAASVLLQLCL).

It carries out the reaction S-ubiquitinyl-[E2 ubiquitin-conjugating enzyme]-L-cysteine + [acceptor protein]-L-lysine = [E2 ubiquitin-conjugating enzyme]-L-cysteine + N(6)-ubiquitinyl-[acceptor protein]-L-lysine.. It participates in protein modification; protein ubiquitination. Functionally, functions as an E3 ubiquitin ligase. The polypeptide is U-box domain-containing protein 3 (PUB3) (Arabidopsis thaliana (Mouse-ear cress)).